Here is a 367-residue protein sequence, read N- to C-terminus: Chorismate synthase (367 aa).

2 residues coordinate NADP(+): arginine 48 and arginine 54. FMN-binding positions include 125–127, 238–239, glycine 278, 293–297, and arginine 319; these read RSS, NA, and KPTSS.

The protein belongs to the chorismate synthase family. In terms of assembly, homotetramer. FMNH2 serves as cofactor.

It carries out the reaction 5-O-(1-carboxyvinyl)-3-phosphoshikimate = chorismate + phosphate. The protein operates within metabolic intermediate biosynthesis; chorismate biosynthesis; chorismate from D-erythrose 4-phosphate and phosphoenolpyruvate: step 7/7. Catalyzes the anti-1,4-elimination of the C-3 phosphate and the C-6 proR hydrogen from 5-enolpyruvylshikimate-3-phosphate (EPSP) to yield chorismate, which is the branch point compound that serves as the starting substrate for the three terminal pathways of aromatic amino acid biosynthesis. This reaction introduces a second double bond into the aromatic ring system. The polypeptide is Chorismate synthase (Stenotrophomonas maltophilia (strain R551-3)).